The chain runs to 256 residues: Na(+)-translocating NADH-quinone reductase subunit E (256 aa).

6 consecutive transmembrane segments (helical) span residues 1–21, 50–70, 83–103, 123–143, 149–169, and 189–209; these read MWLG…AAFI, MSVA…HAFI, LASV…IAAF, GIFL…LFGI, FIPM…AIVI, and MGIS…LTGI. Polar residues predominate over residues 229–249; the sequence is ENTTNPLKESSSKHQPSISKA. The segment at 229–256 is disordered; sequence ENTTNPLKESSSKHQPSISKARTQRRSL.

It belongs to the NqrDE/RnfAE family. In terms of assembly, composed of six subunits; NqrA, NqrB, NqrC, NqrD, NqrE and NqrF.

The protein resides in the cell inner membrane. The catalysed reaction is a ubiquinone + n Na(+)(in) + NADH + H(+) = a ubiquinol + n Na(+)(out) + NAD(+). In terms of biological role, NQR complex catalyzes the reduction of ubiquinone-1 to ubiquinol by two successive reactions, coupled with the transport of Na(+) ions from the cytoplasm to the periplasm. NqrA to NqrE are probably involved in the second step, the conversion of ubisemiquinone to ubiquinol. In Chlamydia pneumoniae (Chlamydophila pneumoniae), this protein is Na(+)-translocating NADH-quinone reductase subunit E.